A 403-amino-acid polypeptide reads, in one-letter code: Peroxisomal membrane protein PEX13 (403 aa).

Over residues 1 to 11 (MASQPPPPPKP) the composition is skewed to pro residues. A disordered region spans residues 1–69 (MASQPPPPPK…SQQTGSGNLN (69 aa)). The Peroxisomal matrix portion of the chain corresponds to 1–134 (MASQPPPPPK…SSRGAFQSIE (134 aa)). A compositionally biased stretch (polar residues) spans 59–69 (PSQQTGSGNLN). A helical transmembrane segment spans residues 135-155 (SIVHAFASVSMMMDATFSAVY). The segment at 145–233 (MMMDATFSAV…EDRAANSAKS (89 aa)) is targeting to peroxisomes. The Cytoplasmic segment spans residues 156-174 (NSFRAVLDVANHFSRLKIH). Residues 175–192 (FTKVFSAFALVRTIRYLY) form a helical membrane-spanning segment. Positions 175–196 (FTKVFSAFALVRTIRYLYRRLQ) are interaction with PEX19. Topologically, residues 193–233 (RRLQWMIGLRRGLENEDLWAESEGTVACLGAEDRAANSAKS) are peroxisomal matrix. Residues 234–254 (WPIFLFFAVILGGPYLIWKLL) traverse the membrane as a helical segment. Residues 255–403 (STHSDEVTDS…TGKNGDKQDL (149 aa)) lie on the Cytoplasmic side of the membrane. The SH3 domain occupies 272–336 (DDHVVARAEY…PANYVKILGK (65 aa)). A Phosphoserine modification is found at serine 354.

Belongs to the peroxin-13 family. As to quaternary structure, interacts (via SH3 domain) with PEX14 (via SH3-binding motif); forming the PEX13-PEX14 docking complex. Interacts with PEX19.

It is found in the peroxisome membrane. In terms of biological role, component of the PEX13-PEX14 docking complex, a translocon channel that specifically mediates the import of peroxisomal cargo proteins bound to PEX5 receptor. The PEX13-PEX14 docking complex forms a large import pore which can be opened to a diameter of about 9 nm. Mechanistically, PEX5 receptor along with cargo proteins associates with the PEX14 subunit of the PEX13-PEX14 docking complex in the cytosol, leading to the insertion of the receptor into the organelle membrane with the concomitant translocation of the cargo into the peroxisome matrix. Involved in the import of PTS1- and PTS2-type containing proteins. This Bos taurus (Bovine) protein is Peroxisomal membrane protein PEX13 (PEX13).